The sequence spans 258 residues: Pimeloyl-[acyl-carrier protein] methyl ester esterase (258 aa).

Residues 16-242 enclose the AB hydrolase-1 domain; sequence LVLLHGWGLN…AAHAPFISHP (227 aa). Substrate is bound by residues W22, 82–83, and 143–147; these read SM and FLALQ. S82 acts as the Nucleophile in catalysis. Catalysis depends on residues D207 and H235. H235 contacts substrate.

Belongs to the AB hydrolase superfamily. Carboxylesterase BioH family. Monomer.

It localises to the cytoplasm. It carries out the reaction 6-carboxyhexanoyl-[ACP] methyl ester + H2O = 6-carboxyhexanoyl-[ACP] + methanol + H(+). It participates in cofactor biosynthesis; biotin biosynthesis. In terms of biological role, the physiological role of BioH is to remove the methyl group introduced by BioC when the pimeloyl moiety is complete. It allows to synthesize pimeloyl-ACP via the fatty acid synthetic pathway through the hydrolysis of the ester bonds of pimeloyl-ACP esters. This chain is Pimeloyl-[acyl-carrier protein] methyl ester esterase, found in Yersinia pseudotuberculosis serotype O:1b (strain IP 31758).